The primary structure comprises 179 residues: Large ribosomal subunit protein uL6 (179 aa).

Belongs to the universal ribosomal protein uL6 family. Part of the 50S ribosomal subunit.

Functionally, this protein binds to the 23S rRNA, and is important in its secondary structure. It is located near the subunit interface in the base of the L7/L12 stalk, and near the tRNA binding site of the peptidyltransferase center. The sequence is that of Large ribosomal subunit protein uL6 from Rhodococcus erythropolis (strain PR4 / NBRC 100887).